Consider the following 315-residue polypeptide: Porphobilinogen deaminase (315 aa).

C234 bears the S-(dipyrrolylmethanemethyl)cysteine mark.

This sequence belongs to the HMBS family. As to quaternary structure, monomer. It depends on dipyrromethane as a cofactor.

The enzyme catalyses 4 porphobilinogen + H2O = hydroxymethylbilane + 4 NH4(+). It participates in porphyrin-containing compound metabolism; protoporphyrin-IX biosynthesis; coproporphyrinogen-III from 5-aminolevulinate: step 2/4. Its function is as follows. Tetrapolymerization of the monopyrrole PBG into the hydroxymethylbilane pre-uroporphyrinogen in several discrete steps. The chain is Porphobilinogen deaminase from Mycolicibacterium paratuberculosis (strain ATCC BAA-968 / K-10) (Mycobacterium paratuberculosis).